The primary structure comprises 175 residues: NADH-quinone oxidoreductase subunit I 2 (175 aa).

4Fe-4S ferredoxin-type domains follow at residues 50 to 82 (HVLQ…IEAA) and 98 to 127 (KVYN…HGHG). Residues C62, C65, C68, C72, C107, C110, C113, and C117 each coordinate [4Fe-4S] cluster.

It belongs to the complex I 23 kDa subunit family. In terms of assembly, NDH-1 is composed of 14 different subunits. Subunits NuoA, H, J, K, L, M, N constitute the membrane sector of the complex. Requires [4Fe-4S] cluster as cofactor.

Its subcellular location is the cell inner membrane. The catalysed reaction is a quinone + NADH + 5 H(+)(in) = a quinol + NAD(+) + 4 H(+)(out). Functionally, NDH-1 shuttles electrons from NADH, via FMN and iron-sulfur (Fe-S) centers, to quinones in the respiratory chain. The immediate electron acceptor for the enzyme in this species is believed to be ubiquinone. Couples the redox reaction to proton translocation (for every two electrons transferred, four hydrogen ions are translocated across the cytoplasmic membrane), and thus conserves the redox energy in a proton gradient. The sequence is that of NADH-quinone oxidoreductase subunit I 2 from Koribacter versatilis (strain Ellin345).